The primary structure comprises 241 residues: tRNA pseudouridine synthase A (241 aa).

The Nucleophile role is filled by Asp-52. Tyr-111 contributes to the substrate binding site.

This sequence belongs to the tRNA pseudouridine synthase TruA family. Homodimer.

It catalyses the reaction uridine(38/39/40) in tRNA = pseudouridine(38/39/40) in tRNA. Formation of pseudouridine at positions 38, 39 and 40 in the anticodon stem and loop of transfer RNAs. The polypeptide is tRNA pseudouridine synthase A (Ureaplasma parvum serovar 3 (strain ATCC 27815 / 27 / NCTC 11736)).